Here is a 142-residue protein sequence, read N- to C-terminus: Large-conductance mechanosensitive channel (142 aa).

The next 3 helical transmembrane spans lie at 19–39 (VGIIIGAAFTAIVSSLVADLV), 41–61 (PFIALFTGGIDFSGWFYALDG), and 78–98 (FAFGNFIMAVINFLIIAFVVF).

It belongs to the MscL family. In terms of assembly, homopentamer.

The protein localises to the cell inner membrane. Its function is as follows. Channel that opens in response to stretch forces in the membrane lipid bilayer. May participate in the regulation of osmotic pressure changes within the cell. This is Large-conductance mechanosensitive channel from Roseobacter denitrificans (strain ATCC 33942 / OCh 114) (Erythrobacter sp. (strain OCh 114)).